We begin with the raw amino-acid sequence, 209 residues long: Pyroglutamyl-peptidase 1 (209 aa).

Catalysis depends on residues Glu-85, Cys-149, and His-168.

It belongs to the peptidase C15 family. In terms of assembly, monomer.

It is found in the cytoplasm. It catalyses the reaction Release of an N-terminal pyroglutamyl group from a polypeptide, the second amino acid generally not being Pro.. With respect to regulation, inhibited by transition metal ions including Ni(2+), Zn(2+), and Cu(2+) and by sulfhydryl-blocking agents. Its function is as follows. Removes 5-oxoproline from various penultimate amino acid residues except L-proline. This chain is Pyroglutamyl-peptidase 1 (PGPEP1), found in Homo sapiens (Human).